The chain runs to 461 residues: V-type ATP synthase beta chain (461 aa).

This sequence belongs to the ATPase alpha/beta chains family.

In terms of biological role, produces ATP from ADP in the presence of a proton gradient across the membrane. The V-type beta chain is a regulatory subunit. This is V-type ATP synthase beta chain from Clostridium botulinum (strain Kyoto / Type A2).